Consider the following 215-residue polypeptide: Proteasome subunit beta inpE (215 aa).

Belongs to the peptidase T1B family.

Its subcellular location is the cytoplasm. It is found in the nucleus. It catalyses the reaction Cleavage of peptide bonds with very broad specificity.. Proteasome subunit beta type-6; part of the inp gene cluster that mediates the biosynthesis of fellutamide B, a mycotoxin that acts as a proteasome inhibitor. In the first step of fellutabmide B biosynthesis inpC activates 3-hydroxydodecanoic acid to generate 3-hydroxydodecanoyl-AMP that is then loaded onto the T0 domain of inpB. The 3-hydroxydodecanoyl-S-phosphopantetheinyl-T0 is sequentially extended with L-Asn and L-Gln by the two CAT modules of inpB. The linear lipodipeptide from inpB is then transferred onto inpA for the addition of the third amino acid, L-Leu. Reductive releasing of the lipotripeptide by the TE domain of inpA produces (2S)-fellutamide B. InpF might be involved in the release and transfer of the lipodipeptide from inpB to inpA. The inp cluster-encoded proteasome subunit inpE confers resistance to internally produced fellutamides. The MFS efflux transporter inpD may contribute to fellutamide resistance as well. The polypeptide is Proteasome subunit beta inpE (inpE) (Emericella nidulans (strain FGSC A4 / ATCC 38163 / CBS 112.46 / NRRL 194 / M139) (Aspergillus nidulans)).